Here is a 160-residue protein sequence, read N- to C-terminus: Transcription elongation factor GreA (160 aa).

Residues 11–38 (YDRLMKELERLKSERPAIIQAIKEAREE) adopt a coiled-coil conformation.

Belongs to the GreA/GreB family.

Necessary for efficient RNA polymerase transcription elongation past template-encoded arresting sites. The arresting sites in DNA have the property of trapping a certain fraction of elongating RNA polymerases that pass through, resulting in locked ternary complexes. Cleavage of the nascent transcript by cleavage factors such as GreA or GreB allows the resumption of elongation from the new 3'terminus. GreA releases sequences of 2 to 3 nucleotides. The chain is Transcription elongation factor GreA from Nitratidesulfovibrio vulgaris (strain DSM 19637 / Miyazaki F) (Desulfovibrio vulgaris).